A 479-amino-acid chain; its full sequence is Ribosomal protein uS12 methylthiotransferase RimO (479 aa).

The segment at 1–34 (MTVNTFDPSKASPVTHASDSASKTPEPNAVAAPS) is disordered. Residues 15-25 (THASDSASKTP) are compositionally biased toward polar residues. One can recognise an MTTase N-terminal domain in the interval 39–151 (NRVGFVSLGC…VMGAVHGYIP (113 aa)). [4Fe-4S] cluster contacts are provided by Cys48, Cys84, Cys113, Cys184, Cys188, and Cys191. The 238-residue stretch at 170 to 407 (LTPRHYAYLK…METQQAISAA (238 aa)) folds into the Radical SAM core domain. In terms of domain architecture, TRAM spans 410-476 (KQKVGYEMDV…DYDLTGIAVE (67 aa)).

This sequence belongs to the methylthiotransferase family. RimO subfamily. It depends on [4Fe-4S] cluster as a cofactor.

It is found in the cytoplasm. It catalyses the reaction L-aspartate(89)-[ribosomal protein uS12]-hydrogen + (sulfur carrier)-SH + AH2 + 2 S-adenosyl-L-methionine = 3-methylsulfanyl-L-aspartate(89)-[ribosomal protein uS12]-hydrogen + (sulfur carrier)-H + 5'-deoxyadenosine + L-methionine + A + S-adenosyl-L-homocysteine + 2 H(+). Functionally, catalyzes the methylthiolation of an aspartic acid residue of ribosomal protein uS12. This Saccharophagus degradans (strain 2-40 / ATCC 43961 / DSM 17024) protein is Ribosomal protein uS12 methylthiotransferase RimO.